Consider the following 412-residue polypeptide: DNA polymerase IV 2 (412 aa).

One can recognise a UmuC domain in the interval 7–192; that stretch reads IFLVDMQSFY…LPVGSMFGVG (186 aa). Residues aspartate 11 and aspartate 107 each coordinate Mg(2+). Glutamate 108 is an active-site residue.

It belongs to the DNA polymerase type-Y family. As to quaternary structure, monomer. Requires Mg(2+) as cofactor.

It localises to the cytoplasm. The catalysed reaction is DNA(n) + a 2'-deoxyribonucleoside 5'-triphosphate = DNA(n+1) + diphosphate. Functionally, poorly processive, error-prone DNA polymerase involved in untargeted mutagenesis. Copies undamaged DNA at stalled replication forks, which arise in vivo from mismatched or misaligned primer ends. These misaligned primers can be extended by PolIV. Exhibits no 3'-5' exonuclease (proofreading) activity. May be involved in translesion synthesis (TSL), in conjunction with the beta clamp from PolIII. This Bacillus subtilis (strain 168) protein is DNA polymerase IV 2 (dinB2).